A 224-amino-acid chain; its full sequence is Peroxiredoxin-6 (224 aa).

One can recognise a Thioredoxin domain in the interval 5-169; it reads LLLGDVAPNF…ILRVVISLQL (165 aa). The segment at 31–40 is required and sufficient for targeting to lysosomes and lamellar bodies; it reads DSWGILFSHP. Phosphothreonine is present on Thr44. Cys47 (cysteine sulfenic acid (-SOH) intermediate; for peroxidase activity) is an active-site residue. At Lys63 the chain carries N6-acetyllysine. Tyr89 carries the phosphotyrosine modification. Asp140 serves as the catalytic For phospholipase activity. Thr177 carries the phosphothreonine; by MAPK modification. Lys209 is subject to N6-acetyllysine; alternate. The residue at position 209 (Lys209) is an N6-succinyllysine; alternate.

Belongs to the peroxiredoxin family. Prx6 subfamily. In terms of assembly, homodimer. Interacts with GSTP1; mediates PRDX6 glutathionylation and regeneration. Interacts with APEX1. Interacts with STH. May interact with FAM168B. May interact with HTR2A. In terms of processing, irreversibly inactivated by overoxidation of Cys-47 to sulfinic acid (Cys-SO(2)H) and sulfonic acid (Cys-SO(3)H) forms upon oxidative stress. Post-translationally, phosphorylation at Thr-177 by MAP kinases increases the phospholipase activity of the enzyme. The phosphorylated form exhibits a greater lysophosphatidylcholine acyltransferase activity compared to the non-phosphorylated form.

The protein localises to the cytoplasm. It is found in the lysosome. The enzyme catalyses a hydroperoxide + 2 glutathione = an alcohol + glutathione disulfide + H2O. The catalysed reaction is a 1,2-diacyl-sn-glycero-3-phosphocholine + H2O = a 1-acyl-sn-glycero-3-phosphocholine + a fatty acid + H(+). It carries out the reaction a 1-acyl-sn-glycero-3-phosphocholine + an acyl-CoA = a 1,2-diacyl-sn-glycero-3-phosphocholine + CoA. It catalyses the reaction 1-hexadecanoyl-sn-glycero-3-phosphocholine + hexadecanoyl-CoA = 1,2-dihexadecanoyl-sn-glycero-3-phosphocholine + CoA. The enzyme catalyses 1,2-dihexadecanoyl-sn-glycero-3-phosphocholine + H2O = 1-hexadecanoyl-sn-glycero-3-phosphocholine + hexadecanoate + H(+). Thiol-specific peroxidase that catalyzes the reduction of hydrogen peroxide and organic hydroperoxides to water and alcohols, respectively. Can reduce H(2)O(2) and short chain organic, fatty acid, and phospholipid hydroperoxides. Also has phospholipase activity, and can therefore either reduce the oxidized sn-2 fatty acyl group of phospholipids (peroxidase activity) or hydrolyze the sn-2 ester bond of phospholipids (phospholipase activity). These activities are dependent on binding to phospholipids at acidic pH and to oxidized phospholipds at cytosolic pH. Plays a role in cell protection against oxidative stress by detoxifying peroxides and in phospholipid homeostasis. Exhibits acyl-CoA-dependent lysophospholipid acyltransferase which mediates the conversion of lysophosphatidylcholine (1-acyl-sn-glycero-3-phosphocholine or LPC) into phosphatidylcholine (1,2-diacyl-sn-glycero-3-phosphocholine or PC). Shows a clear preference for LPC as the lysophospholipid and for palmitoyl CoA as the fatty acyl substrate. The sequence is that of Peroxiredoxin-6 (PRDX6) from Pongo abelii (Sumatran orangutan).